The primary structure comprises 254 residues: Protein N-terminal and lysine N-methyltransferase EFM7 (254 aa).

S-adenosyl-L-methionine contacts are provided by residues Trp57, 84–86 (GAA), Asp106, Trp138, and Ser165.

The protein belongs to the class I-like SAM-binding methyltransferase superfamily. EFM7 family.

It is found in the cytoplasm. S-adenosyl-L-methionine-dependent protein methyltransferase that trimethylates the N-terminal glycine 'Gly-2' of elongation factor 1-alpha, before also catalyzing the mono- and dimethylation of 'Lys-3'. This Debaryomyces hansenii (strain ATCC 36239 / CBS 767 / BCRC 21394 / JCM 1990 / NBRC 0083 / IGC 2968) (Yeast) protein is Protein N-terminal and lysine N-methyltransferase EFM7.